A 150-amino-acid chain; its full sequence is Large ribosomal subunit protein bL9 (150 aa).

It belongs to the bacterial ribosomal protein bL9 family.

Its function is as follows. Binds to the 23S rRNA. This is Large ribosomal subunit protein bL9 from Neisseria meningitidis serogroup B (strain ATCC BAA-335 / MC58).